A 308-amino-acid chain; its full sequence is Bifunctional protein FolD (308 aa).

Residues 171–173 (GRS), serine 198, and isoleucine 239 contribute to the NADP(+) site.

It belongs to the tetrahydrofolate dehydrogenase/cyclohydrolase family. In terms of assembly, homodimer.

The catalysed reaction is (6R)-5,10-methylene-5,6,7,8-tetrahydrofolate + NADP(+) = (6R)-5,10-methenyltetrahydrofolate + NADPH. It catalyses the reaction (6R)-5,10-methenyltetrahydrofolate + H2O = (6R)-10-formyltetrahydrofolate + H(+). Its pathway is one-carbon metabolism; tetrahydrofolate interconversion. Catalyzes the oxidation of 5,10-methylenetetrahydrofolate to 5,10-methenyltetrahydrofolate and then the hydrolysis of 5,10-methenyltetrahydrofolate to 10-formyltetrahydrofolate. The chain is Bifunctional protein FolD from Borreliella burgdorferi (strain ATCC 35210 / DSM 4680 / CIP 102532 / B31) (Borrelia burgdorferi).